Consider the following 327-residue polypeptide: Interleukin-12 subunit beta (327 aa).

Positions 1–22 are cleaved as a signal peptide; it reads MHPQQLVVSWFSLVLLASPIVA. Residues 23-106 enclose the Ig-like C2-type domain; the sequence is IWELEKNVYV…LSRSLLLLHK (84 aa). Cys50 and Cys90 are joined by a disulfide. Residue Asn223 is glycosylated (N-linked (GlcNAc...) asparagine). The Fibronectin type-III domain maps to 238–327; the sequence is PPKNLQLRPL…WSEWASVSCS (90 aa).

It belongs to the IL-12B family. As to quaternary structure, heterodimer with IL12A; disulfide-linked. The heterodimer is known as interleukin IL-12. Heterodimer with IL23A; disulfide-linked. The heterodimer is known as interleukin IL-23. Also secreted as a monomer. Interacts with NBR1; this interaction promotes IL-12 secretion.

The protein localises to the secreted. Cytokine that can act as a growth factor for activated T and NK cells, enhance the lytic activity of NK/lymphokine-activated killer cells, and stimulate the production of IFN-gamma by resting PBMC. Functionally, associates with IL23A to form the IL-23 interleukin, a heterodimeric cytokine which functions in innate and adaptive immunity. IL-23 may constitute with IL-17 an acute response to infection in peripheral tissues. IL-23 binds to a heterodimeric receptor complex composed of IL12RB1 and IL23R, activates the Jak-Stat signaling cascade, stimulates memory rather than naive T-cells and promotes production of pro-inflammatory cytokines. IL-23 induces autoimmune inflammation and thus may be responsible for autoimmune inflammatory diseases and may be important for tumorigenesis. The chain is Interleukin-12 subunit beta (IL12B) from Capra hircus (Goat).